The sequence spans 83 residues: Cytochrome b559 subunit alpha (83 aa).

The chain crosses the membrane as a helical span at residues 22-36 (VIHAVTLPAIFLAGF). H24 lines the heme pocket.

The protein belongs to the PsbE/PsbF family. As to quaternary structure, heterodimer of an alpha subunit and a beta subunit. PSII is composed of 1 copy each of membrane proteins PsbA, PsbB, PsbC, PsbD, PsbE, PsbF, PsbH, PsbI, PsbJ, PsbK, PsbL, PsbM, PsbT, PsbX, PsbY, PsbZ, Psb30/Ycf12, peripheral proteins PsbO, CyanoQ (PsbQ), PsbU, PsbV and a large number of cofactors. It forms dimeric complexes. The cofactor is heme b.

It is found in the cellular thylakoid membrane. Its function is as follows. This b-type cytochrome is tightly associated with the reaction center of photosystem II (PSII). PSII is a light-driven water:plastoquinone oxidoreductase that uses light energy to abstract electrons from H(2)O, generating O(2) and a proton gradient subsequently used for ATP formation. It consists of a core antenna complex that captures photons, and an electron transfer chain that converts photonic excitation into a charge separation. The protein is Cytochrome b559 subunit alpha of Synechococcus sp. (strain RCC307).